The chain runs to 861 residues: Leucine--tRNA ligase (861 aa).

Positions 42-52 (PYPSGRLHMGH) match the 'HIGH' region motif. The 'KMSKS' region signature appears at 619–623 (KMSKS). Lysine 622 provides a ligand contact to ATP.

This sequence belongs to the class-I aminoacyl-tRNA synthetase family.

The protein resides in the cytoplasm. It carries out the reaction tRNA(Leu) + L-leucine + ATP = L-leucyl-tRNA(Leu) + AMP + diphosphate. This chain is Leucine--tRNA ligase, found in Haemophilus ducreyi (strain 35000HP / ATCC 700724).